The sequence spans 380 residues: Gonadotropin-releasing hormone II receptor (380 aa).

Residues 1–40 (MSAVNGTPWGSSAREEVWAGSGVEVEGSELPTFSTAAKVR) lie on the Extracellular side of the membrane. Residues 41 to 60 (VGVTIVLFVSSAGGNLAVLW) form a helical membrane-spanning segment. The Cytoplasmic segment spans residues 61–76 (SVTRPQPSQLRPSPVR). A helical transmembrane segment spans residues 77-96 (RLFAHLAAADLLVTFVVMPL). Residues 97–114 (DATWNITVQWLAGDIACR) lie on the Extracellular side of the membrane. Asn-101 is a glycosylation site (N-linked (GlcNAc...) asparagine). An intrachain disulfide couples Cys-113 to Cys-188. The helical transmembrane segment at 115–136 (TLMFLKLMAMYAAAFLPVVIGL) threads the bilayer. Over 137 to 160 (DRQAAVLNPLGSRSGVRKLLGAAW) the chain is Cytoplasmic. Residues 161 to 178 (GLSFLLALPQLFLFHTVH) traverse the membrane as a helical segment. Topologically, residues 179 to 204 (RAGPVPFTQCATKGSFKARWQETTYN) are extracellular. Residues 205–224 (LFTFCCLFLLPLTAMAICYS) traverse the membrane as a helical segment. Over 225-278 (RIVLGVSSPRTRKGSHAPAGEFALRRSFDNRPRVRLRALRLALLVLLTFILCWT) the chain is Cytoplasmic. A helical transmembrane segment spans residues 279–297 (PYYLLGLWYWFSPSMLSEV). At 298–303 (PPSLSH) the chain is on the extracellular side. A helical transmembrane segment spans residues 304-323 (ILFLFGLLNAPLDPLLYGAF). The Cytoplasmic portion of the chain corresponds to 324-380 (TLGCRRGHQELSMDSSREEGSRRMFQQDIQALRQTEVQKTVTSRKAGETKDIPITSI).

The protein belongs to the G-protein coupled receptor 1 family. Post-translationally, phosphorylated on the C-terminal cytoplasmic tail.

It localises to the cell membrane. Its function is as follows. Receptor for gonadotropin releasing hormone II (GnRH II). This receptor mediates its action by association with G proteins that activate a phosphatidylinositol-calcium second messenger system. The sequence is that of Gonadotropin-releasing hormone II receptor (GNRHR2) from Callithrix jacchus (White-tufted-ear marmoset).